The chain runs to 308 residues: Oligopeptide transport system permease protein AmiD (308 aa).

A run of 6 helical transmembrane segments spans residues 43-63, 111-131, 145-167, 171-193, 234-254, and 274-294; these read TVVM…YPMF, ILIS…VGGI, VYNV…SIGA, NLIF…VQIL, MLPS…GLPI, and AYLF…LFVV. Residues 107–295 form the ABC transmembrane type-1 domain; it reads ARNSILISVI…LVSLSLFVVG (189 aa).

The protein belongs to the binding-protein-dependent transport system permease family. OppBC subfamily.

It localises to the cell membrane. In terms of biological role, part of the binding-protein-dependent transport system for oligopeptides; probably responsible for the translocation of the substrate across the membrane. This chain is Oligopeptide transport system permease protein AmiD (amiD), found in Streptococcus pneumoniae (strain ATCC BAA-255 / R6).